The primary structure comprises 424 residues: UDP-N-acetylglucosamine 1-carboxyvinyltransferase (424 aa).

Lys-22–Asn-23 lines the phosphoenolpyruvate pocket. Arg-98 serves as a coordination point for UDP-N-acetyl-alpha-D-glucosamine. The active-site Proton donor is Cys-122. Position 122 is a 2-(S-cysteinyl)pyruvic acid O-phosphothioketal (Cys-122). Residues Arg-127 to Gln-131, Asp-312, and Ile-334 contribute to the UDP-N-acetyl-alpha-D-glucosamine site.

It belongs to the EPSP synthase family. MurA subfamily.

It is found in the cytoplasm. The catalysed reaction is phosphoenolpyruvate + UDP-N-acetyl-alpha-D-glucosamine = UDP-N-acetyl-3-O-(1-carboxyvinyl)-alpha-D-glucosamine + phosphate. It functions in the pathway cell wall biogenesis; peptidoglycan biosynthesis. Cell wall formation. Adds enolpyruvyl to UDP-N-acetylglucosamine. The protein is UDP-N-acetylglucosamine 1-carboxyvinyltransferase of Xanthomonas oryzae pv. oryzae (strain MAFF 311018).